The chain runs to 279 residues: DegV domain-containing protein SA1258 (279 aa).

One can recognise a DegV domain in the interval 4-278; it reads QIIVTDSTSD…QGAIGLVVLK (275 aa). Hexadecanoate is bound by residues T61 and S93.

In terms of biological role, may bind long-chain fatty acids, such as palmitate, and may play a role in lipid transport or fatty acid metabolism. The polypeptide is DegV domain-containing protein SA1258 (Staphylococcus aureus (strain N315)).